A 428-amino-acid chain; its full sequence is Light-independent protochlorophyllide reductase subunit N (428 aa).

3 residues coordinate [4Fe-4S] cluster: Cys29, Cys54, and Cys115.

This sequence belongs to the BchN/ChlN family. Protochlorophyllide reductase is composed of three subunits; BchL, BchN and BchB. Forms a heterotetramer of two BchB and two BchN subunits. Requires [4Fe-4S] cluster as cofactor.

The catalysed reaction is chlorophyllide a + oxidized 2[4Fe-4S]-[ferredoxin] + 2 ADP + 2 phosphate = protochlorophyllide a + reduced 2[4Fe-4S]-[ferredoxin] + 2 ATP + 2 H2O. It participates in porphyrin-containing compound metabolism; bacteriochlorophyll biosynthesis (light-independent). In terms of biological role, component of the dark-operative protochlorophyllide reductase (DPOR) that uses Mg-ATP and reduced ferredoxin to reduce ring D of protochlorophyllide (Pchlide) to form chlorophyllide a (Chlide). This reaction is light-independent. The NB-protein (BchN-BchB) is the catalytic component of the complex. The sequence is that of Light-independent protochlorophyllide reductase subunit N from Cereibacter sphaeroides (strain ATCC 17023 / DSM 158 / JCM 6121 / CCUG 31486 / LMG 2827 / NBRC 12203 / NCIMB 8253 / ATH 2.4.1.) (Rhodobacter sphaeroides).